A 146-amino-acid polypeptide reads, in one-letter code: Putative phosphotransferase enzyme IIA component YadI (146 aa).

Positions 1–124 (MLGWVITCHD…RIVELGAPEV (124 aa)) constitute a PTS EIIA type-4 domain. His-9 acts as the Tele-phosphohistidine intermediate in catalysis.

The protein localises to the cytoplasm. In terms of biological role, the phosphoenolpyruvate-dependent sugar phosphotransferase system (sugar PTS), a major carbohydrate active -transport system, catalyzes the phosphorylation of incoming sugar substrates concomitantly with their translocation across the cell membrane. This is Putative phosphotransferase enzyme IIA component YadI (yadI) from Escherichia coli (strain K12).